Here is a 253-residue protein sequence, read N- to C-terminus: Ribosome-inactivating protein saporin-9 (253 aa).

E176 is a catalytic residue.

It carries out the reaction Endohydrolysis of the N-glycosidic bond at one specific adenosine on the 28S rRNA.. In terms of biological role, ribosome-inactivating protein of type 1, inhibits protein synthesis in animal cells. The sequence is that of Ribosome-inactivating protein saporin-9 (SAP9) from Saponaria officinalis (Common soapwort).